The chain runs to 400 residues: Exodeoxyribonuclease 7 large subunit (400 aa).

The protein belongs to the XseA family. As to quaternary structure, heterooligomer composed of large and small subunits.

The protein resides in the cytoplasm. The enzyme catalyses Exonucleolytic cleavage in either 5'- to 3'- or 3'- to 5'-direction to yield nucleoside 5'-phosphates.. Functionally, bidirectionally degrades single-stranded DNA into large acid-insoluble oligonucleotides, which are then degraded further into small acid-soluble oligonucleotides. The sequence is that of Exodeoxyribonuclease 7 large subunit from Clostridium kluyveri (strain NBRC 12016).